The sequence spans 259 residues: Phosphatidylglycerol--prolipoprotein diacylglyceryl transferase (259 aa).

Transmembrane regions (helical) follow at residues 9–29 (IIFS…VIGI), 55–75 (FITY…VLLY), 92–112 (EGGM…YLFC), and 117–137 (INFL…LFLG). A 1,2-diacyl-sn-glycero-3-phospho-(1'-sn-glycerol) is bound at residue R138. 3 helical membrane-spanning segments follow: residues 172–192 (QLYE…YTTF), 201–221 (GLNS…IEIF), and 228–248 (IGFI…MLLL).

Belongs to the Lgt family.

It localises to the cell inner membrane. It catalyses the reaction L-cysteinyl-[prolipoprotein] + a 1,2-diacyl-sn-glycero-3-phospho-(1'-sn-glycerol) = an S-1,2-diacyl-sn-glyceryl-L-cysteinyl-[prolipoprotein] + sn-glycerol 1-phosphate + H(+). The protein operates within protein modification; lipoprotein biosynthesis (diacylglyceryl transfer). Functionally, catalyzes the transfer of the diacylglyceryl group from phosphatidylglycerol to the sulfhydryl group of the N-terminal cysteine of a prolipoprotein, the first step in the formation of mature lipoproteins. The protein is Phosphatidylglycerol--prolipoprotein diacylglyceryl transferase of Rickettsia conorii (strain ATCC VR-613 / Malish 7).